We begin with the raw amino-acid sequence, 64 residues long: Large ribosomal subunit protein bL28 (64 aa).

This sequence belongs to the bacterial ribosomal protein bL28 family.

The chain is Large ribosomal subunit protein bL28 from Bifidobacterium adolescentis (strain ATCC 15703 / DSM 20083 / NCTC 11814 / E194a).